Reading from the N-terminus, the 48-residue chain is Palustrin-3a (48 aa).

A disulfide bridge connects residues C43 and C48.

In terms of tissue distribution, expressed by the skin glands.

Its subcellular location is the secreted. Antimicrobial activity against Gram-negative bacterium E.coli. The polypeptide is Palustrin-3a (Lithobates palustris (Pickerel frog)).